A 237-amino-acid chain; its full sequence is Phosphoadenosine 5'-phosphosulfate reductase (237 aa).

C231 serves as the catalytic Nucleophile; cysteine thiosulfonate intermediate.

It belongs to the PAPS reductase family. CysH subfamily.

It localises to the cytoplasm. The enzyme catalyses [thioredoxin]-disulfide + sulfite + adenosine 3',5'-bisphosphate + 2 H(+) = [thioredoxin]-dithiol + 3'-phosphoadenylyl sulfate. The protein operates within sulfur metabolism; hydrogen sulfide biosynthesis; sulfite from sulfate: step 3/3. Functionally, catalyzes the formation of sulfite from phosphoadenosine 5'-phosphosulfate (PAPS) using thioredoxin as an electron donor. In Xylella fastidiosa (strain 9a5c), this protein is Phosphoadenosine 5'-phosphosulfate reductase.